A 291-amino-acid chain; its full sequence is 3-hydroxy-5-phosphonooxypentane-2,4-dione thiolase (291 aa).

The Schiff-base intermediate with substrate role is filled by K203.

Belongs to the DeoC/FbaB aldolase family. Homodecamer.

It is found in the cytoplasm. The catalysed reaction is dihydroxyacetone phosphate + acetyl-CoA = 3-hydroxy-2,4-dioxopentyl phosphate + CoA. Functionally, involved in the degradation of phospho-AI-2, thereby terminating induction of the lsr operon and closing the AI-2 signaling cycle. Catalyzes the transfer of an acetyl moiety from 3-hydroxy-5-phosphonooxypentane-2,4-dione to CoA to form glycerone phosphate and acetyl-CoA. The sequence is that of 3-hydroxy-5-phosphonooxypentane-2,4-dione thiolase from Yersinia pseudotuberculosis serotype O:1b (strain IP 31758).